Here is a 248-residue protein sequence, read N- to C-terminus: Probable transcriptional regulatory protein Rsph17025_0577 (248 aa).

The interval 1 to 21 is disordered; it reads MAGHSKWANIQHRKGKQDKLR.

This sequence belongs to the TACO1 family.

It is found in the cytoplasm. The polypeptide is Probable transcriptional regulatory protein Rsph17025_0577 (Cereibacter sphaeroides (strain ATCC 17025 / ATH 2.4.3) (Rhodobacter sphaeroides)).